The chain runs to 207 residues: Probable RNA 2'-phosphotransferase (207 aa).

It belongs to the KptA/TPT1 family.

Its function is as follows. Removes the 2'-phosphate from RNA via an intermediate in which the phosphate is ADP-ribosylated by NAD followed by a presumed transesterification to release the RNA and generate ADP-ribose 1''-2''-cyclic phosphate (APPR&gt;P). May function as an ADP-ribosylase. The protein is Probable RNA 2'-phosphotransferase of Methanosarcina barkeri (strain Fusaro / DSM 804).